A 110-amino-acid chain; its full sequence is UPF0251 protein PH0803 (110 aa).

Belongs to the UPF0251 family.

This chain is UPF0251 protein PH0803, found in Pyrococcus horikoshii (strain ATCC 700860 / DSM 12428 / JCM 9974 / NBRC 100139 / OT-3).